Here is a 465-residue protein sequence, read N- to C-terminus: Sensor histidine kinase ZraS (465 aa).

Residues 1–14 (MRFMQRSKDSLAKW) lie on the Cytoplasmic side of the membrane. The helical transmembrane segment at 15–35 (LSAILPVVIVGLVGLFAVTVI) threads the bilayer. Residues 36-201 (RDYGRASEAD…ATQSGEKRNT (166 aa)) lie on the Periplasmic side of the membrane. The chain crosses the membrane as a helical span at residues 202-222 (LIILFALATVLLASVLSFFWY). Over 223 to 465 (RRYLRSRQLL…VNITRKDPQG (243 aa)) the chain is Cytoplasmic. The 208-residue stretch at 251–458 (GVAHEIRNPL…TFTLWLPVNI (208 aa)) folds into the Histidine kinase domain. His254 carries the phosphohistidine; by autocatalysis modification.

Post-translationally, autophosphorylated.

The protein resides in the cell inner membrane. The enzyme catalyses ATP + protein L-histidine = ADP + protein N-phospho-L-histidine.. Its activity is regulated as follows. Activity of the ZraS/ZraR two-component system is repressed by the zinc-bound form of ZraP, which probably interacts with the periplasmic region of ZraS. Part of the Zra signaling pathway, an envelope stress response (ESR) system composed of the periplasmic accessory protein ZraP, the histidine kinase ZraS and the transcriptional regulator ZraR. The ZraPSR system contributes to antibiotic resistance and is important for membrane integrity in the presence of membrane-targeting biocides. ZraS is a member of the two-component regulatory system ZraS/ZraR. Functions as a membrane-associated sensor kinase that phosphorylates ZraR in response to high concentrations of Zn(2+) or Pb(2+) in the medium. Binds one zinc molecule with high affinity via its periplasmic domain, inducing a conformational change that is transmitted to the histidine kinase domain and leads to the activation of ZraR. The system has no direct role in zinc or copper resistance. The protein is Sensor histidine kinase ZraS of Escherichia coli (strain K12).